The chain runs to 279 residues: Mirror-image polydactyly gene 1 protein homolog (279 aa).

Residues 1–11 are compositionally biased toward basic and acidic residues; that stretch reads MNSEQSIRELG. The interval 1–21 is disordered; that stretch reads MNSEQSIRELGNEVPSEDLEL. 2 coiled-coil regions span residues 65 to 169 and 218 to 255; these read LNKE…MLEN and AEEM…STNN. Residues 247–268 are disordered; it reads KQNQTSTNNTKHPTAKNNQEHT. Polar residues predominate over residues 248–263; it reads QNQTSTNNTKHPTAKN.

In Mus musculus (Mouse), this protein is Mirror-image polydactyly gene 1 protein homolog (Mipol1).